Consider the following 513-residue polypeptide: Sucrose transport protein SUC1 (513 aa).

The span at 1-11 (MGAYETEKPTK) shows a compositional bias: basic and acidic residues. A disordered region spans residues 1–26 (MGAYETEKPTKDAAALETQSPEDFDQ). The Cytoplasmic portion of the chain corresponds to 1–32 (MGAYETEKPTKDAAALETQSPEDFDQPSPLRK). Serine 20 carries the post-translational modification Phosphoserine. The chain crosses the membrane as a helical span at residues 33–53 (IISVASIAAGVQFGWALQLSL). Residues 54–67 (LTPYVQLLGIPHKW) are Extracellular-facing. The helical transmembrane segment at 68–88 (SSLIWLCGPVSGMIVQPIVGF) threads the bilayer. Residues 89–101 (HSDRCRSKFGRRR) lie on the Cytoplasmic side of the membrane. The helical transmembrane segment at 102–122 (PFIATGAALVAVAVFLIGYAA) threads the bilayer. Topologically, residues 123–139 (DFGYKMGDKLEEKVKVR) are extracellular. Residues 140-160 (AIGIFALGFWILDVANNTLQG) traverse the membrane as a helical segment. Residues 161 to 178 (PCRAFLADLAAGDAKRTR) are Cytoplasmic-facing. Residues 179 to 199 (VANAFFSFFMAVGNVLGYAAG) traverse the membrane as a helical segment. Over 200–224 (SYTNLHKMFPFTMTKACDIYCANLK) the chain is Extracellular. A helical transmembrane segment spans residues 225 to 245 (TCFFLSITLLLIVTVTSLWYV). At 246–282 (NDKQWSPPPRNADDDEKTSSVPLFGEIFGAFKVMKRP) the chain is on the cytoplasmic side. The chain crosses the membrane as a helical span at residues 283–303 (MWMLLIVTALNWIAWFPFLLF). Residues 304 to 334 (DTDWMGREVFGGDSDGNERSKKLYSLGVQSG) are Extracellular-facing. Residues 335-355 (AMGLMFNSIVLGFMSLGVEWI) form a helical membrane-spanning segment. The Cytoplasmic segment spans residues 356–365 (GRKLGGAKRL). A helical membrane pass occupies residues 366–386 (WGIVNFILAAGLAMTVLVTKF). Topologically, residues 387–408 (AEDHRKTAGDLAGPSASVKAGA) are extracellular. A helical membrane pass occupies residues 409-429 (LSLFAVLGIPLAITFSTPFAL). Over 430–441 (ASIFSSCSGAGQ) the chain is Cytoplasmic. A helical membrane pass occupies residues 442–462 (GLSLGVLNLAIVIPQMIVSLG). At 463-474 (GGPFDALFGGGN) the chain is on the extracellular side. A helical transmembrane segment spans residues 475–495 (LPAFIVAAIAAAISGVLALTV). Over 496–513 (LPSPPPDAPKATTMGGFH) the chain is Cytoplasmic.

Belongs to the glycoside-pentoside-hexuronide (GPH) cation symporter transporter (TC 2.A.2.4) family. In terms of tissue distribution, expressed in flowers (at protein level). Highly expressed in pollen. Expressed in pollen tubes and root vascular cylinder, pericycle and endodermis.

It is found in the membrane. It catalyses the reaction sucrose(out) + H(+)(out) = sucrose(in) + H(+)(in). It participates in glycan biosynthesis; sucrose metabolism. With respect to regulation, inhibited by DEPC, protonophores (e.g. dinitrophenol and carbonyl cyanide m-chlorophenyl-hydrazone (CCCP)), and SH group inhibitors (e.g. N-ethylmaleimide (NEM) and p-chloromercuriphenyl sulphonic acid (PCMPS)). In terms of biological role, responsible for the transport of sucrose into the cell, with the concomitant uptake of protons (symport system). This transport is both voltage- and energy-dependent. Can also transport other glucosides such as maltose, alpha-phenylglucoside and beta-phenylglucoside. May also transport biotin. Required for normal pollen germination and anthocyanin accumulation induced by sucrose. This chain is Sucrose transport protein SUC1, found in Arabidopsis thaliana (Mouse-ear cress).